Reading from the N-terminus, the 118-residue chain is Large ribosomal subunit protein bL20 (118 aa).

This sequence belongs to the bacterial ribosomal protein bL20 family.

Functionally, binds directly to 23S ribosomal RNA and is necessary for the in vitro assembly process of the 50S ribosomal subunit. It is not involved in the protein synthesizing functions of that subunit. This Sulfurimonas denitrificans (strain ATCC 33889 / DSM 1251) (Thiomicrospira denitrificans (strain ATCC 33889 / DSM 1251)) protein is Large ribosomal subunit protein bL20.